We begin with the raw amino-acid sequence, 66 residues long: Large ribosomal subunit protein bL35 (66 aa).

The span at 1–16 (MPKQKTHRASAKRFKR) shows a compositional bias: basic residues. Positions 1-21 (MPKQKTHRASAKRFKRTGSGG) are disordered.

It belongs to the bacterial ribosomal protein bL35 family.

The polypeptide is Large ribosomal subunit protein bL35 (Streptococcus agalactiae serotype Ia (strain ATCC 27591 / A909 / CDC SS700)).